We begin with the raw amino-acid sequence, 104 residues long: Large ribosomal subunit protein uL23 (104 aa).

Belongs to the universal ribosomal protein uL23 family. As to quaternary structure, part of the 50S ribosomal subunit. Contacts protein L29, and trigger factor when it is bound to the ribosome.

In terms of biological role, one of the early assembly proteins it binds 23S rRNA. One of the proteins that surrounds the polypeptide exit tunnel on the outside of the ribosome. Forms the main docking site for trigger factor binding to the ribosome. This chain is Large ribosomal subunit protein uL23, found in Polynucleobacter necessarius subsp. necessarius (strain STIR1).